The primary structure comprises 447 residues: Dihydroorotase (447 aa).

H81 and H83 together coordinate Zn(2+). Substrate contacts are provided by residues 83-85 (HFR) and N115. Zn(2+) is bound by residues D171, H198, and H252. Residue N298 coordinates substrate. Residue D325 coordinates Zn(2+). Residue D325 is part of the active site. Substrate-binding positions include H329 and 343–344 (FG).

Belongs to the metallo-dependent hydrolases superfamily. DHOase family. Class I DHOase subfamily. The cofactor is Zn(2+).

It carries out the reaction (S)-dihydroorotate + H2O = N-carbamoyl-L-aspartate + H(+). It functions in the pathway pyrimidine metabolism; UMP biosynthesis via de novo pathway; (S)-dihydroorotate from bicarbonate: step 3/3. Functionally, catalyzes the reversible cyclization of carbamoyl aspartate to dihydroorotate. The polypeptide is Dihydroorotase (Ehrlichia canis (strain Jake)).